The following is a 525-amino-acid chain: Putative ankyrin repeat protein FPV228 (525 aa).

ANK repeat units lie at residues 39–71 (HPDN…TRDI), 72–122 (LGNT…ACNN), 123–152 (LNQT…KVNI), 156–185 (YGNT…DVNI), 190–226 (YWYS…TRCR), 227–254 (LNTT…DINA), 258–287 (NDNA…DVNM), 291–320 (RGKT…NPNI), and 324–353 (IMNT…DINH).

The protein is Putative ankyrin repeat protein FPV228 of Fowlpox virus (strain NVSL) (FPV).